Reading from the N-terminus, the 509-residue chain is Probable aspartic-type endopeptidase CTSD (509 aa).

A signal peptide spans 1–21 (MQFLWLCLLSAVTLQFTGTLA). A Peptidase A1 domain is found at 102–408 (YFSEVKVGSE…DFDKNRVGLA (307 aa)). The active site involves Asp120. A glycan (N-linked (GlcNAc...) asparagine) is linked at Asn174. The active site involves Asp302. Asn361 carries an N-linked (GlcNAc...) asparagine glycan. Residues 451–489 (NKAPSGGSPGLPAESGSDSTTNGEATNGATSSPNSSSSV) are disordered. A compositionally biased stretch (polar residues) spans 466–480 (GSDSTTNGEATNGAT). A glycan (N-linked (GlcNAc...) asparagine) is linked at Asn484. The GPI-anchor amidated serine moiety is linked to residue Ser485. The propeptide at 486 to 509 (SSSVLTPTWLTLAVFFAIGSSLWS) is removed in mature form.

The protein belongs to the peptidase A1 family.

The protein resides in the cell membrane. Its function is as follows. Probable GPI-anchored aspartic-type endopeptidase which contributes to virulence. The polypeptide is Probable aspartic-type endopeptidase CTSD (CTSD) (Trichophyton verrucosum (strain HKI 0517)).